The primary structure comprises 207 residues: MPMRKRHFYRLLPLASLLLAACTIPVSKGPATSPTSPQWRQHEQQLQQLGQFETRGAFAYLSDKQKVYARFFWQQTSPERYRLLLTNPLGSTELELVVQPGVTQLTDNQGKHYVSDDPQEMIQKLTGMSIPLESLRQWILGLPGDTPNFTLDDKYRLKKLTYQQNGVTWVVDYQEYNTQVTPPLPSRLELNQDGQRIKLKMDSWTIK.

The signal sequence occupies residues 1–21; the sequence is MPMRKRHFYRLLPLASLLLAA. Cysteine 22 is lipidated: N-palmitoyl cysteine. Residue cysteine 22 is the site of S-diacylglycerol cysteine attachment.

This sequence belongs to the LolB family. In terms of assembly, monomer.

The protein localises to the cell outer membrane. Plays a critical role in the incorporation of lipoproteins in the outer membrane after they are released by the LolA protein. The protein is Outer-membrane lipoprotein LolB of Yersinia pseudotuberculosis serotype O:3 (strain YPIII).